A 583-amino-acid polypeptide reads, in one-letter code: L-galactono-1,4-lactone dehydrogenase 1, mitochondrial (583 aa).

The N-terminal 36 residues, 1 to 36 (MRRLLLAGILRRASSSPSSHHHLHLVRALSASSPLP), are a transit peptide targeting the mitochondrion. A propeptide spans 37-78 (ASDADLRKYAGYALLLLGCGAATYYSFPLPPDALHKKAVPFK) (removed in mature form). A helical transmembrane segment spans residues 45-61 (YAGYALLLLGCGAATYY). Positions 95–266 (THEVHTRVLL…AEVTLQCVER (172 aa)) constitute an FAD-binding PCMH-type domain.

The cofactor is FAD.

The protein resides in the mitochondrion membrane. It carries out the reaction L-galactono-1,4-lactone + 4 Fe(III)-[cytochrome c] = L-dehydroascorbate + 4 Fe(II)-[cytochrome c] + 5 H(+). The protein operates within cofactor biosynthesis; L-ascorbate biosynthesis. In terms of biological role, involved in the biosynthesis of ascorbic acid. The sequence is that of L-galactono-1,4-lactone dehydrogenase 1, mitochondrial (GLDH1) from Oryza sativa subsp. japonica (Rice).